The following is a 74-amino-acid chain: Exodeoxyribonuclease 7 small subunit (74 aa).

Belongs to the XseB family. As to quaternary structure, heterooligomer composed of large and small subunits.

It is found in the cytoplasm. It catalyses the reaction Exonucleolytic cleavage in either 5'- to 3'- or 3'- to 5'-direction to yield nucleoside 5'-phosphates.. Its function is as follows. Bidirectionally degrades single-stranded DNA into large acid-insoluble oligonucleotides, which are then degraded further into small acid-soluble oligonucleotides. This chain is Exodeoxyribonuclease 7 small subunit, found in Vesicomyosocius okutanii subsp. Calyptogena okutanii (strain HA).